The chain runs to 608 residues: Preterminal protein (608 aa).

The Nuclear localization signal motif lies at 338-347 (RLPMRRRRRR). The interval 342 to 377 (RRRRRRAPPPPPMSEELSEPEVEAFPPASPPRRSFE) is disordered. The residue at position 536 (S536) is an O-(5'-phospho-DNA)-serine.

Belongs to the adenoviridae terminal protein family. Heterodimer with the polymerase; this heterodimer binds to bp 9 to 18 of the genome. Interacts with host POU2F1; POU2F1 binds to the auxiliary sequences in the inverted terminal repeats and tethers the pTP-POL heterodimer to the origin DNA thereby participating in the assembly of the pre-initiation complex (POL-TP-DBP-NFIA-POU2F1). In terms of processing, preterminal protein is used to replicate viral genome, upon genomic encapsidation it is processed first into iTP and finally into TP by adenovirus protease.

It is found in the host nucleus matrix. Protein covalently bound to the viral DNA that acts as a primer for viral genomic replication by DNA strand displacement. Assembles on the viral origin of replication in an initiation complex with viral polymerase, DBP, host NFIA and host POU2F1/OCT1. During initiation, the polymerase covalently couples the first dCTP with Ser-580 of pTP. The terminal protein stimulates the template activity over 20 fold compared to protein-free templates. Neo-synthesized viral genomes are linked to two preterminal proteins, one for each 5' end. These new genomes are encapsidated in the nucleus, and during capsid maturation by viral protease, preterminal protein is first cleaved into intermediary (iTP), then into mature TP. May play a role in host nuclear matrix localization of genomic DNA. In Canine adenovirus serotype 1 (strain CLL) (CAdV-1), this protein is Preterminal protein.